A 120-amino-acid chain; its full sequence is Large ribosomal subunit protein uL18 (120 aa).

The protein belongs to the universal ribosomal protein uL18 family. In terms of assembly, part of the 50S ribosomal subunit; part of the 5S rRNA/L5/L18/L25 subcomplex. Contacts the 5S and 23S rRNAs.

This is one of the proteins that bind and probably mediate the attachment of the 5S RNA into the large ribosomal subunit, where it forms part of the central protuberance. This is Large ribosomal subunit protein uL18 from Acidiphilium cryptum (strain JF-5).